Here is a 650-residue protein sequence, read N- to C-terminus: Laccase-like multicopper oxidase 1 (650 aa).

The first 20 residues, 1 to 20 (MLLSKLSILLAKWLSVAVYA), serve as a signal peptide directing secretion. Plastocyanin-like domains are found at residues 41-151 (QVPS…IVED), 162-360 (ERIL…LRYN), and 439-595 (KPVL…VVGD). Cys46 and Cys254 are oxidised to a cystine. Residues Asn55 and Asn83 are each glycosylated (N-linked (GlcNAc...) asparagine). Residues His87, His89, His133, and His135 each contribute to the Cu cation site. His501, His504, His506, His576, Cys577, His578, and His582 together coordinate Cu cation. The N-linked (GlcNAc...) asparagine glycan is linked to Asn620.

It belongs to the multicopper oxidase family. In terms of assembly, monomer. In terms of processing, N-glycosylation Asn-55 and Asn-83 is involved in folding, conformational stability and laccase activity.

It carries out the reaction 2 2',3,4-trihydroxy-trans-chalcone + O2 + 2 H(+) = 2 3',4'-dihydroxyaurone + 2 H2O. Its activity is regulated as follows. Retains almost half of its activity in presence of high salt concentrations up to 100 mM NaCl. Retains also more than 85% of its original activity in the presence of 1 mM EDTA, indicating a satisfactory resistance towards chelators, which is rare among metal-containing enzyme. The activity drops significantly in the presence of NaN(3) or SDS. Appears more active in the presence of methanol compared to ethanol, but acetone or DMSO addition severely affect remaining laccase activity. Functionally, yellow laccase-like multicopper oxidase that is able to oxidize a variety of phenolic compounds including standard laccase substrates such as 2'-azino-bis(3-ethylbenzothiazoline-6-sulphonic acid) (ABTS) and 2,6-dimethoxyphenol (2,6-DMP). The existence of an ortho-hydroxy group is crucial for oxidation since pyrogallol and catechol, which contain ortho-hydroxy groups, are readily oxidized, which is not the case for resorcinol and hydroquinone, that contain meta- and para-hydroxy groups, respectively. The same is also true for the existence of a methoxy group in an ortho-position, since 2,6-DMP, guaiacol and ferulic and caffeic acids are also rather easily oxidized compared with the corresponding unsubstituted compound. Can be used for the bioconversion of 2',3,4-trihy-droxychalcone to 3',4'-dihydroxy-aurone, a bioactive aurone recently shown to possess inhibitory activity against several isoforms of the histone deacetylase complex (HDAC). This is Laccase-like multicopper oxidase 1 from Thermothelomyces thermophilus (strain ATCC 42464 / BCRC 31852 / DSM 1799) (Sporotrichum thermophile).